Consider the following 230-residue polypeptide: Dephospho-CoA kinase (230 aa).

Positions 3 to 206 constitute a DPCK domain; it reads LVGLTGGIAS…EPLTWKERLR (204 aa). 8-15 lines the ATP pocket; it reads GGIASGKS.

Belongs to the CoaE family.

It catalyses the reaction 3'-dephospho-CoA + ATP = ADP + CoA + H(+). Its pathway is cofactor biosynthesis; coenzyme A biosynthesis; CoA from (R)-pantothenate: step 5/5. Its function is as follows. Catalyzes the phosphorylation of the 3'-hydroxyl group of dephosphocoenzyme A to form coenzyme A. In Oryza sativa subsp. japonica (Rice), this protein is Dephospho-CoA kinase.